A 707-amino-acid chain; its full sequence is Early transcription factor 82 kDa subunit (707 aa).

Belongs to the poxviridae VETF large subunit family. Heterodimer of a 70 kDa and a 82 kDa subunit. Part of the early transcription complex composed of ETF, RAP94, and the DNA-directed RNA polymerase.

The protein localises to the virion. Functionally, acts with RNA polymerase to initiate transcription from early gene promoters. Is recruited by the RPO-associated protein of 94 kDa (RAP94) to form the early transcription complex, which also contains the core RNA polymerase. ETF heterodimer binds to early gene promoters. The protein is Early transcription factor 82 kDa subunit (VETFL) of Molluscum contagiosum virus subtype 1 (MOCV).